Reading from the N-terminus, the 320-residue chain is tRNA dimethylallyltransferase (320 aa).

16-23 (GPTASGKT) lines the ATP pocket. 18–23 (TASGKT) contributes to the substrate binding site. Interaction with substrate tRNA stretches follow at residues 41 to 44 (DSAL), 165 to 169 (QRIQR), and 247 to 252 (RCVGYR).

It belongs to the IPP transferase family. As to quaternary structure, monomer. Mg(2+) serves as cofactor.

It carries out the reaction adenosine(37) in tRNA + dimethylallyl diphosphate = N(6)-dimethylallyladenosine(37) in tRNA + diphosphate. In terms of biological role, catalyzes the transfer of a dimethylallyl group onto the adenine at position 37 in tRNAs that read codons beginning with uridine, leading to the formation of N6-(dimethylallyl)adenosine (i(6)A). This Azoarcus sp. (strain BH72) protein is tRNA dimethylallyltransferase.